The following is a 383-amino-acid chain: Neuropeptide Y receptor type 1 (383 aa).

Residues 1-44 (MNSTLSSQVENHSIYYNFSEKNSQFLAFENDDCHLPLAMIFTLA) are Extracellular-facing. 3 N-linked (GlcNAc...) asparagine glycosylation sites follow: Asn2, Asn11, and Asn17. The chain crosses the membrane as a helical span at residues 45 to 65 (LAYGAVIILGVSGNLALIIII). The Cytoplasmic segment spans residues 66–76 (LKQKEMRNVTN). The helical transmembrane segment at 77 to 97 (ILIVNLSFSDLLVAIMCLPFT) threads the bilayer. At 98 to 116 (FVYTLMDHWVFGEVMCKLN) the chain is on the extracellular side. A disulfide bond links Cys113 and Cys198. The helical transmembrane segment at 117–137 (PFVQCVSITVSIFSLVLIAVE) threads the bilayer. Topologically, residues 138 to 154 (RHQLIINPRGWRPSNRH) are cytoplasmic. Residues 155–175 (AYVGIAVIWVLAVASSLPFLI) traverse the membrane as a helical segment. Residues 176–211 (YQVLTDEPFQNVTLDAFKDKYVCFDKFLSDSHRLSY) lie on the Extracellular side of the membrane. The helical transmembrane segment at 212–232 (TTLLLVLQYFGPLCFIFICYF) threads the bilayer. Topologically, residues 233-260 (KIYIRLKRRNNMMDKMRDNKYRSSETKR) are cytoplasmic. The chain crosses the membrane as a helical span at residues 261-281 (INVMLLSIVVAFAVCWLPLTI). Topologically, residues 282-299 (FNTVFDWNHQIIATCNHN) are extracellular. Residues 300–320 (LLFLLCHLTAMISTCINPIFY) form a helical membrane-spanning segment. Residues 321–383 (GFLNKNFQRD…KIHSDDNEKI (63 aa)) are Cytoplasmic-facing. The S-palmitoyl cysteine moiety is linked to residue Cys338. Ser368 is subject to Phosphoserine.

This sequence belongs to the G-protein coupled receptor 1 family.

Its subcellular location is the cell membrane. Receptor for neuropeptide Y and peptide YY. In Sus scrofa (Pig), this protein is Neuropeptide Y receptor type 1 (NPY1R).